A 782-amino-acid polypeptide reads, in one-letter code: Probable transcription factor claV (782 aa).

Disordered regions lie at residues 1–37 (MPPR…VAKR), 49–128 (ALLT…GKDE), 156–180 (KSTS…NLTH), 717–745 (AGVG…PMPV), and 758–782 (GNTV…GGVD). A compositionally biased stretch (basic residues) spans 70–79 (RKTKKKKKKG). The segment covering 86 to 102 (QTPVMTEPPQSSRTSPN) has biased composition (polar residues). Residues 157 to 166 (STSAGASGSS) are compositionally biased toward low complexity. Residues 723–740 (ADEDDEVEDDDEDEDEEV) are compositionally biased toward acidic residues.

It localises to the nucleus. It participates in secondary metabolite biosynthesis; terpenoid biosynthesis. In terms of biological role, probable transcription factor; part of the gene cluster that mediates the biosynthesis of clavilactone A, a meroterpenoid that features a unique benzo-fused ten-membered carbocyclic ring unit with an alpha,beta-epoxy-gamma-lactone moiety, forming an intriguing 10/5/3 tricyclic nested skeleton. This is Probable transcription factor claV from Ampulloclitocybe clavipes (Club foot).